Consider the following 627-residue polypeptide: 1-deoxy-D-xylulose-5-phosphate synthase (627 aa).

Thiamine diphosphate-binding positions include His-87 and 128–130 (GHS). Residue Asp-159 coordinates Mg(2+). Thiamine diphosphate contacts are provided by residues 160–161 (GA), Asn-188, Phe-295, and Glu-375. A Mg(2+)-binding site is contributed by Asn-188.

Belongs to the transketolase family. DXPS subfamily. In terms of assembly, homodimer. The cofactor is Mg(2+). Thiamine diphosphate serves as cofactor.

The catalysed reaction is D-glyceraldehyde 3-phosphate + pyruvate + H(+) = 1-deoxy-D-xylulose 5-phosphate + CO2. It functions in the pathway metabolic intermediate biosynthesis; 1-deoxy-D-xylulose 5-phosphate biosynthesis; 1-deoxy-D-xylulose 5-phosphate from D-glyceraldehyde 3-phosphate and pyruvate: step 1/1. Catalyzes the acyloin condensation reaction between C atoms 2 and 3 of pyruvate and glyceraldehyde 3-phosphate to yield 1-deoxy-D-xylulose-5-phosphate (DXP). The sequence is that of 1-deoxy-D-xylulose-5-phosphate synthase from Pseudomonas aeruginosa (strain LESB58).